A 93-amino-acid chain; its full sequence is Alpha-defensin 26 (93 aa).

Positions 1–19 (MKTLVLLSALFLLAFQVQA) are cleaved as a signal peptide. The propeptide occupies 20 to 58 (DPIQNTDEETNTEVQPQEEDQAVSVSFGNPEGSDLQEES). The segment at 24 to 55 (NTDEETNTEVQPQEEDQAVSVSFGNPEGSDLQ) is disordered. The span at 25–40 (TDEETNTEVQPQEEDQ) shows a compositional bias: acidic residues. 3 disulfide bridges follow: C64-C92, C66-C81, and C71-C91.

The protein belongs to the alpha-defensin family.

The protein localises to the secreted. Functionally, may have microbicidal activities. In Mus musculus (Mouse), this protein is Alpha-defensin 26 (Defa26).